The sequence spans 317 residues: Ribosomal large subunit pseudouridine synthase D (317 aa).

One can recognise an S4 RNA-binding domain in the interval 15 to 89 (WRLDRALASL…IPLEIVFEDE (75 aa)). Asp141 is an active-site residue.

It belongs to the pseudouridine synthase RluA family.

The protein resides in the cytoplasm. It carries out the reaction uridine(1911/1915/1917) in 23S rRNA = pseudouridine(1911/1915/1917) in 23S rRNA. Functionally, responsible for synthesis of pseudouridine from uracil at positions 1911, 1915 and 1917 in 23S ribosomal RNA. This is Ribosomal large subunit pseudouridine synthase D from Zymomonas mobilis subsp. mobilis (strain ATCC 31821 / ZM4 / CP4).